The sequence spans 278 residues: Bifunctional protein FolD (278 aa).

NADP(+) contacts are provided by residues 165-167 (GRS), S190, and T231.

It belongs to the tetrahydrofolate dehydrogenase/cyclohydrolase family. In terms of assembly, homodimer.

The enzyme catalyses (6R)-5,10-methylene-5,6,7,8-tetrahydrofolate + NADP(+) = (6R)-5,10-methenyltetrahydrofolate + NADPH. It catalyses the reaction (6R)-5,10-methenyltetrahydrofolate + H2O = (6R)-10-formyltetrahydrofolate + H(+). The protein operates within one-carbon metabolism; tetrahydrofolate interconversion. In terms of biological role, catalyzes the oxidation of 5,10-methylenetetrahydrofolate to 5,10-methenyltetrahydrofolate and then the hydrolysis of 5,10-methenyltetrahydrofolate to 10-formyltetrahydrofolate. The polypeptide is Bifunctional protein FolD (Clostridium acetobutylicum (strain ATCC 824 / DSM 792 / JCM 1419 / IAM 19013 / LMG 5710 / NBRC 13948 / NRRL B-527 / VKM B-1787 / 2291 / W)).